Here is a 236-residue protein sequence, read N- to C-terminus: Phosphoribosylaminoimidazole-succinocarboxamide synthase (236 aa).

Belongs to the SAICAR synthetase family.

It catalyses the reaction 5-amino-1-(5-phospho-D-ribosyl)imidazole-4-carboxylate + L-aspartate + ATP = (2S)-2-[5-amino-1-(5-phospho-beta-D-ribosyl)imidazole-4-carboxamido]succinate + ADP + phosphate + 2 H(+). It participates in purine metabolism; IMP biosynthesis via de novo pathway; 5-amino-1-(5-phospho-D-ribosyl)imidazole-4-carboxamide from 5-amino-1-(5-phospho-D-ribosyl)imidazole-4-carboxylate: step 1/2. The sequence is that of Phosphoribosylaminoimidazole-succinocarboxamide synthase from Campylobacter jejuni subsp. doylei (strain ATCC BAA-1458 / RM4099 / 269.97).